The following is a 158-amino-acid chain: Serglycin (158 aa).

An N-terminal signal peptide occupies residues M1–G27. Cysteines 40 and 49 form a disulfide. O-linked (Xyl...) (glycosaminoglycan) serine glycosylation is found at S94 and S96. Repeat copies occupy residues S94–G95, S96–G97, F98–G99, S100–G101, S102–G103, S104–G105, S106–G107, S108–G109, and S110–G111. The segment at S94–G111 is 9 X 2 AA tandem repeats of [SF]-G. O-linked (Xyl...) (glycosaminoglycan) serine glycans are attached at residues S100, S102, S104, S106, S108, and S110. The interval R134–L158 is disordered.

The protein belongs to the serglycin family. In terms of assembly, binds to activated CD44 and to GZMB. Post-translationally, O-glycosylated; contains chondroitin sulfate and heparan sulfate.

It localises to the cytoplasmic granule. The protein resides in the cytolytic granule. Its subcellular location is the secreted. The protein localises to the extracellular space. It is found in the golgi apparatus. Its function is as follows. Plays a role in formation of mast cell secretory granules and mediates storage of various compounds in secretory vesicles. Required for storage of some proteases in both connective tissue and mucosal mast cells and for storage of granzyme B in T-lymphocytes. Plays a role in localizing neutrophil elastase in azurophil granules of neutrophils. Mediates processing of MMP2. Plays a role in cytotoxic cell granule-mediated apoptosis by forming a complex with granzyme B which is delivered to cells by perforin to induce apoptosis. Regulates the secretion of TNF-alpha and may also regulate protease secretion. Inhibits bone mineralization. In Homo sapiens (Human), this protein is Serglycin (SRGN).